Consider the following 273-residue polypeptide: R-spondin-3 (273 aa).

The N-terminal stretch at 1–21 (MHLRLISWFFIILNFMEYIGS) is a signal peptide. 2 FU repeats span residues 35–86 (PNVS…GYYG) and 92–135 (INKC…GLEA). N-linked (GlcNAc...) asparagine glycosylation is present at asparagine 36. Disulfide bonds link cysteine 41–cysteine 48, cysteine 45–cysteine 54, cysteine 57–cysteine 76, cysteine 80–cysteine 95, cysteine 98–cysteine 105, cysteine 102–cysteine 111, cysteine 114–cysteine 125, cysteine 129–cysteine 142, cysteine 148–cysteine 190, cysteine 159–cysteine 166, and cysteine 199–cysteine 206. In terms of domain architecture, TSP type-1 spans 147–207 (HCEASEWSPW…KCTVQRKKCP (61 aa)). The disordered stretch occupies residues 201 to 273 (VQRKKCPKGE…QKSVSVSTVH (73 aa)). The span at 213 to 223 (RKGRERKRKKP) shows a compositional bias: basic residues. Basic and acidic residues predominate over residues 224–252 (NKEESKDAIPDNKGLEPSRETPEQRENKQ).

Belongs to the R-spondin family. As to quaternary structure, interacts with the extracellular domain of FZD8 and LRP6. It however does not form a ternary complex with FZD8 and LRP6. Interacts with WNT1. Binds heparin. Interacts with LGR4, LGR5 and LGR6.

It localises to the secreted. In terms of biological role, activator of the canonical Wnt signaling pathway by acting as a ligand for LGR4-6 receptors, which acts as a key regulator of angiogenesis. Upon binding to LGR4-6 (LGR4, LGR5 or LGR6), LGR4-6 associate with phosphorylated LRP6 and frizzled receptors that are activated by extracellular Wnt receptors, triggering the canonical Wnt signaling pathway to increase expression of target genes. Also regulates the canonical Wnt/beta-catenin-dependent pathway and non-canonical Wnt signaling by acting as an inhibitor of ZNRF3, an important regulator of the Wnt signaling pathway. Acts as a ligand for frizzled FZD8 and LRP6. May negatively regulate the TGF-beta pathway. Acts as a key regulator of angiogenesis by controlling vascular stability and pruning: acts by activating the non-canonical Wnt signaling pathway in endothelial cells. Can also amplify Wnt signaling pathway independently of LGR4-6 receptors, possibly by acting as a direct antagonistic ligand to RNF43 and ZNRF3. The sequence is that of R-spondin-3 (RSPO3) from Bos taurus (Bovine).